Consider the following 200-residue polypeptide: Recombination protein RecR (200 aa).

The segment at 59 to 74 (CSTCGNIDSQNPCTVC) adopts a C4-type zinc-finger fold. One can recognise a Toprim domain in the interval 82–177 (SIIVVVADVA…KVTRLAHGVP (96 aa)).

It belongs to the RecR family.

Functionally, may play a role in DNA repair. It seems to be involved in an RecBC-independent recombinational process of DNA repair. It may act with RecF and RecO. The polypeptide is Recombination protein RecR (Rhodopseudomonas palustris (strain ATCC BAA-98 / CGA009)).